The primary structure comprises 314 residues: Carbamate kinase (314 aa).

This sequence belongs to the carbamate kinase family. Homodimer.

Its subcellular location is the cytoplasm. The catalysed reaction is hydrogencarbonate + NH4(+) + ATP = carbamoyl phosphate + ADP + H2O + H(+). This chain is Carbamate kinase (cpkA), found in Pyrococcus horikoshii (strain ATCC 700860 / DSM 12428 / JCM 9974 / NBRC 100139 / OT-3).